Here is a 185-residue protein sequence, read N- to C-terminus: Dihydrofolate reductase 1 (185 aa).

Residues 8–185 (ELVLVVAADE…QASPRPLDDL (178 aa)) enclose the DHFR domain.

This sequence belongs to the dihydrofolate reductase family.

It carries out the reaction (6S)-5,6,7,8-tetrahydrofolate + NADP(+) = 7,8-dihydrofolate + NADPH + H(+). It participates in cofactor biosynthesis; tetrahydrofolate biosynthesis; 5,6,7,8-tetrahydrofolate from 7,8-dihydrofolate: step 1/1. In terms of biological role, key enzyme in folate metabolism. Catalyzes an essential reaction for de novo glycine and purine synthesis, and for DNA precursor synthesis. The chain is Dihydrofolate reductase 1 (folA1) from Haloarcula marismortui (strain ATCC 43049 / DSM 3752 / JCM 8966 / VKM B-1809) (Halobacterium marismortui).